Here is a 459-residue protein sequence, read N- to C-terminus: V-type ATP synthase beta chain (459 aa).

This sequence belongs to the ATPase alpha/beta chains family.

Produces ATP from ADP in the presence of a proton gradient across the membrane. The V-type beta chain is a regulatory subunit. This is V-type ATP synthase beta chain from Thermoanaerobacter pseudethanolicus (strain ATCC 33223 / 39E) (Clostridium thermohydrosulfuricum).